The sequence spans 432 residues: Glutamyl-tRNA reductase (432 aa).

Residues 49-52, serine 101, 106-108, and glutamine 112 contribute to the substrate site; these read TCNR and EPQ. Residue cysteine 50 is the Nucleophile of the active site. NADP(+) is bound at residue 181 to 186; it reads GAGETI. The segment at 408-432 is disordered; it reads PEKPGYRHPPVATPIVRTDDANPAP.

The protein belongs to the glutamyl-tRNA reductase family. As to quaternary structure, homodimer.

It carries out the reaction (S)-4-amino-5-oxopentanoate + tRNA(Glu) + NADP(+) = L-glutamyl-tRNA(Glu) + NADPH + H(+). It participates in porphyrin-containing compound metabolism; protoporphyrin-IX biosynthesis; 5-aminolevulinate from L-glutamyl-tRNA(Glu): step 1/2. Functionally, catalyzes the NADPH-dependent reduction of glutamyl-tRNA(Glu) to glutamate 1-semialdehyde (GSA). The chain is Glutamyl-tRNA reductase from Xanthomonas campestris pv. campestris (strain B100).